We begin with the raw amino-acid sequence, 338 residues long: MNVCTFTLVLALVGSVSGQYYDYDAPLFMYGELSPNCAPECNCPHSYPTAMYCDDLKLKSVPMVPPGIKYLYLRNNQIDHIDEKAFENVTDLQWLILDHNLLENSKIKGKVFSKLKQLKKLHINYNNLTESVGPLPKSLQDLQLANNKISKLGSFDGLVNLTFIYLQHNQLKEEAVSASLKGLKSLEYLDLSFNQMSKLPAGLPTSLLTLYLDNNKITNIPDEYFNRFTGLQYLRLSHNELADSGVPGNSFNISSLLELDLSYNKLKSIPTVNENLENYYLEVNKLEKFDVKSFCKILGPLSYSKIKHLRLDGNPLTQSSLPPDMYECLRVANEITVN.

A signal peptide spans 1-18 (MNVCTFTLVLALVGSVSG). Gln19 is subject to Pyrrolidone carboxylic acid. Sulfotyrosine is present on residues Tyr20, Tyr21, Tyr23, and Tyr30. Residues 28-66 (FMYGELSPNCAPECNCPHSYPTAMYCDDLKLKSVPMVPP) form the LRRNT domain. LRR repeat units follow at residues 67–88 (GIKYLYLRNNQIDHIDEKAFEN), 91–114 (DLQWLILDHNLLENSKIKGKVFSK), 117–137 (QLKKLHINYNNLTESVGPLPK), 138–159 (SLQDLQLANNKISKLGSFDGLV), 160–181 (NLTFIYLQHNQLKEEAVSASLK), 185–205 (SLEYLDLSFNQMSKLPAGLPT), 206–227 (SLLTLYLDNNKITNIPDEYFNR), and 230–250 (GLQYLRLSHNELADSGVPGNS). An N-linked (GlcNAc...) (keratan sulfate) asparagine glycan is attached at Asn88. An N-linked (GlcNAc...) (keratan sulfate) asparagine glycan is attached at Asn127. Residue Asn160 is glycosylated (N-linked (GlcNAc...) (keratan sulfate) asparagine). Residue Asn252 is glycosylated (N-linked (GlcNAc...) (keratan sulfate) asparagine). 2 LRR repeats span residues 255–276 (SLLELDLSYNKLKSIPTVNENL) and 277–296 (ENYYLEVNKLEKFDVKSFCK). An intrachain disulfide couples Cys295 to Cys328. Phosphoserine is present on Ser304. An LRR 11 repeat occupies 305–326 (KIKHLRLDGNPLTQSSLPPDMY).

Belongs to the small leucine-rich proteoglycan (SLRP) family. SLRP class II subfamily. As to quaternary structure, binds to laminin. Contains keratan sulfate.

The protein resides in the secreted. Its subcellular location is the extracellular space. It localises to the extracellular matrix. In Rattus norvegicus (Rat), this protein is Lumican (Lum).